The sequence spans 680 residues: GFSIRAFGAEEQSVPNKQSSVQDYPWYGYDSYSKGYPDYSPLKTYHNLKVNLDGSKEYQAYCFNLTKHFPSKSDSVRSQWYKKLEGTNENFIKLADKPRIEDGQLQQNILRILYNGYPNDRNGIMKGIDPLNAILVTQNAIWYYTDSSYISDTSKAFQQEETDLKLDSQQLQLMRNALKRLINPKEVESLPNQVPANYQLSIFQSSDKTFQNLLSAEYVPDTPPKPGEEPPAKTEKTSVIIRKYAEGDYSKLLEGATLKLAQIEGSGFQEKIFDSNKSGEKVELPNGTYVLSELKPPQGYGVATPITFKVAAEKVLIKNKEGQFVENQNKEIAEPYSVTAFNDFEEIGYLSDFNNYGKFYYAKNTNGTNQVVYCFNADLHSPPDSYDHGANIDPDVSESKEIKYTHVSGYDLYKYAVTPRDKDADLFLKHIKKILDKGYKKKGDTYKTLTEAQFRAATQLAIYYYTDSADLTTLKTYNDNKGYHGFDKLDDATLAVVHELITYAEDVTLPMTQNLDFFVPNSSRYQALIGTQYHPNELIDVISMEDKQAPIIPITHKLTISKTVTGTIADKKKEFNFEIHLKSSDGQAISGTYPTNSGELTVTDGKATFTLKDGESLIVEGLPSGYSYEITETGASDYEVSVNGKNAPDGKATKASVKEDETVAFENRKDLVPPTGLTTD.

Residues 62–211 (CFNLTKHFPS…IFQSSDKTFQ (150 aa)) constitute a cross-link (isoglutamyl cysteine thioester (Cys-Gln)). The segment at 217-236 (EYVPDTPPKPGEEPPAKTEK) is disordered. Over residues 226–236 (PGEEPPAKTEK) the composition is skewed to basic and acidic residues. Positions 243–546 (KYAEGDYSKL…ELIDVISMED (304 aa)) form a cross-link, isoaspartyl lysine isopeptide (Lys-Asp). The region spanning 253–311 (LEGATLKLAQIEGSGFQEKIFDSNKSGEKVELPNGTYVLSELKPPQGYGVATPITFKVA) is the CNA-B domain. A cross-link (isoglutamyl cysteine thioester (Cys-Gln)) is located at residues 374–526 (CFNADLHSPP…FFVPNSSRYQ (153 aa)). A cross-link (isoaspartyl lysine isopeptide (Lys-Asn)) is located at residues 562–667 (KTVTGTIADK…KEDETVAFEN (106 aa)). The VPPTG sorting signal motif lies at 672–676 (VPPTG). A Threonyl lysine isopeptide (Thr-Lys) (interchain with K-? in major pilin subunit) cross-link involves residue threonine 675. Residues 676–680 (GLTTD) constitute a propeptide, removed by sortase.

In terms of assembly, monomer. Proteolytically processed and assembled in pili through a transpeptidation reaction catalyzed by a sortase, which leads to a covalent link between Cpa and a major pilin subunit.

The protein resides in the fimbrium. Functionally, component of the pilus tip. Can bind covalently, via its two reactive thioester bonds, to molecular targets from host cell surface and can thus mediate adhesion of the streptococcal pili to host cells. Lysine side chains or a carbohydrate with a free amine group might be candidates for Cpa binding. In vitro, can covalently bind to spermidine, but it is unlikely that spermidine is the natural target of Cpa. The sequence is that of Pilus tip adhesin Cpa (cpa) from Streptococcus pyogenes.